Here is a 418-residue protein sequence, read N- to C-terminus: Putative methylthiotransferase HP_0285 (418 aa).

The MTTase N-terminal domain occupies 2-110 (KKVYFKTFGC…INALLQEKKR (109 aa)). Residues Cys-11, Cys-45, Cys-74, Cys-144, Cys-148, and Cys-151 each contribute to the [4Fe-4S] cluster site. The Radical SAM core domain occupies 130–355 (FVGKTRAFIK…KDLIFHKNKA (226 aa)).

Belongs to the methylthiotransferase family. [4Fe-4S] cluster is required as a cofactor.

The polypeptide is Putative methylthiotransferase HP_0285 (Helicobacter pylori (strain ATCC 700392 / 26695) (Campylobacter pylori)).